Consider the following 340-residue polypeptide: Glyceraldehyde-3-phosphate dehydrogenase (340 aa).

NAD(+) contacts are provided by residues serine 11–isoleucine 12 and glycine 111. Serine 140–asparagine 142 contacts D-glyceraldehyde 3-phosphate. Cysteine 141 functions as the Nucleophile in the catalytic mechanism. Residue arginine 169 coordinates NAD(+). Histidine 195–glycine 196 contributes to the D-glyceraldehyde 3-phosphate binding site. Glutamine 303 is an NAD(+) binding site.

Belongs to the glyceraldehyde-3-phosphate dehydrogenase family. Homotetramer.

It localises to the cytoplasm. The catalysed reaction is D-glyceraldehyde 3-phosphate + phosphate + NADP(+) = (2R)-3-phospho-glyceroyl phosphate + NADPH + H(+). The enzyme catalyses D-glyceraldehyde 3-phosphate + phosphate + NAD(+) = (2R)-3-phospho-glyceroyl phosphate + NADH + H(+). Its pathway is carbohydrate degradation; glycolysis; pyruvate from D-glyceraldehyde 3-phosphate: step 1/5. This chain is Glyceraldehyde-3-phosphate dehydrogenase, found in Methanococcus maripaludis (strain C5 / ATCC BAA-1333).